Consider the following 162-residue polypeptide: NADH-quinone oxidoreductase subunit I (162 aa).

4Fe-4S ferredoxin-type domains follow at residues 53-83 (LRRYPNGEERCIACKLCEAVCPAQAITIEAE) and 93-122 (TRYDIDMTKCIYCGFCQEACPVDAIVEGPN). C63, C66, C69, C73, C102, C105, C108, and C112 together coordinate [4Fe-4S] cluster.

This sequence belongs to the complex I 23 kDa subunit family. In terms of assembly, NDH-1 is composed of 14 different subunits. Subunits NuoA, H, J, K, L, M, N constitute the membrane sector of the complex. [4Fe-4S] cluster is required as a cofactor.

The protein resides in the cell inner membrane. It carries out the reaction a quinone + NADH + 5 H(+)(in) = a quinol + NAD(+) + 4 H(+)(out). Its function is as follows. NDH-1 shuttles electrons from NADH, via FMN and iron-sulfur (Fe-S) centers, to quinones in the respiratory chain. The immediate electron acceptor for the enzyme in this species is believed to be ubiquinone. Couples the redox reaction to proton translocation (for every two electrons transferred, four hydrogen ions are translocated across the cytoplasmic membrane), and thus conserves the redox energy in a proton gradient. The protein is NADH-quinone oxidoreductase subunit I of Sphingopyxis alaskensis (strain DSM 13593 / LMG 18877 / RB2256) (Sphingomonas alaskensis).